Reading from the N-terminus, the 397-residue chain is Arginine biosynthesis bifunctional protein ArgJ (397 aa).

Residues threonine 147, lysine 173, threonine 184, glutamate 270, asparagine 392, and threonine 397 each contribute to the substrate site. Threonine 184 functions as the Nucleophile in the catalytic mechanism.

Belongs to the ArgJ family. Heterotetramer of two alpha and two beta chains.

Its subcellular location is the cytoplasm. The enzyme catalyses N(2)-acetyl-L-ornithine + L-glutamate = N-acetyl-L-glutamate + L-ornithine. The catalysed reaction is L-glutamate + acetyl-CoA = N-acetyl-L-glutamate + CoA + H(+). It participates in amino-acid biosynthesis; L-arginine biosynthesis; L-ornithine and N-acetyl-L-glutamate from L-glutamate and N(2)-acetyl-L-ornithine (cyclic): step 1/1. Its pathway is amino-acid biosynthesis; L-arginine biosynthesis; N(2)-acetyl-L-ornithine from L-glutamate: step 1/4. In terms of biological role, catalyzes two activities which are involved in the cyclic version of arginine biosynthesis: the synthesis of N-acetylglutamate from glutamate and acetyl-CoA as the acetyl donor, and of ornithine by transacetylation between N(2)-acetylornithine and glutamate. The chain is Arginine biosynthesis bifunctional protein ArgJ from Streptococcus mutans serotype c (strain ATCC 700610 / UA159).